Here is a 100-residue protein sequence, read N- to C-terminus: Urease subunit gamma (100 aa).

It belongs to the urease gamma subunit family. In terms of assembly, heterotrimer of UreA (gamma), UreB (beta) and UreC (alpha) subunits. Three heterotrimers associate to form the active enzyme.

The protein localises to the cytoplasm. It carries out the reaction urea + 2 H2O + H(+) = hydrogencarbonate + 2 NH4(+). It participates in nitrogen metabolism; urea degradation; CO(2) and NH(3) from urea (urease route): step 1/1. This chain is Urease subunit gamma, found in Prochlorococcus marinus (strain MIT 9312).